A 39-amino-acid chain; its full sequence is Photosystem II reaction center protein X (39 aa).

A helical transmembrane segment spans residues 11–31 (SLLWGAIVVVIPLSAALLFIS).

The protein belongs to the PsbX family. Type 1 subfamily. As to quaternary structure, PSII is composed of 1 copy each of membrane proteins PsbA, PsbB, PsbC, PsbD, PsbE, PsbF, PsbH, PsbI, PsbJ, PsbK, PsbL, PsbM, PsbT, PsbX, PsbY, PsbZ, Psb30/Ycf12, at least 3 peripheral proteins of the oxygen-evolving complex and a large number of cofactors. It forms dimeric complexes.

The protein resides in the plastid. Its subcellular location is the cyanelle thylakoid membrane. Involved in the binding and/or turnover of quinones at the Q(B) site of photosystem II (PSII). PSII is a light-driven water plastoquinone oxidoreductase, using light energy to abstract electrons from H(2)O, generating a proton gradient subsequently used for ATP formation. The protein is Photosystem II reaction center protein X of Cyanophora paradoxa.